The chain runs to 459 residues: ATP synthase subunit beta (459 aa).

148 to 155 is an ATP binding site; it reads GGAGVGKT.

Belongs to the ATPase alpha/beta chains family. In terms of assembly, F-type ATPases have 2 components, CF(1) - the catalytic core - and CF(0) - the membrane proton channel. CF(1) has five subunits: alpha(3), beta(3), gamma(1), delta(1), epsilon(1). CF(0) has three main subunits: a(1), b(2) and c(9-12). The alpha and beta chains form an alternating ring which encloses part of the gamma chain. CF(1) is attached to CF(0) by a central stalk formed by the gamma and epsilon chains, while a peripheral stalk is formed by the delta and b chains.

It is found in the cell inner membrane. It catalyses the reaction ATP + H2O + 4 H(+)(in) = ADP + phosphate + 5 H(+)(out). Produces ATP from ADP in the presence of a proton gradient across the membrane. The catalytic sites are hosted primarily by the beta subunits. The chain is ATP synthase subunit beta from Thiobacillus denitrificans (strain ATCC 25259 / T1).